Reading from the N-terminus, the 114-residue chain is Macrophage migration inhibitory factor homolog (114 aa).

Residue Pro2 is the Proton acceptor; via imino nitrogen of the active site. Substrate is bound by residues Lys33 and Asn98.

It belongs to the MIF family.

Its subcellular location is the secreted. It catalyses the reaction L-dopachrome = 5,6-dihydroxyindole-2-carboxylate. The catalysed reaction is 3-phenylpyruvate = enol-phenylpyruvate. Its function is as follows. Tautomerization of the methyl ester of L-dopachrome. Inhibits migration of human peripheral blood mononuclear cells. The polypeptide is Macrophage migration inhibitory factor homolog (Trichuris trichiura (Whipworm)).